The chain runs to 73 residues: Sec-independent protein translocase protein TatA (73 aa).

A helical membrane pass occupies residues 1-21 (MGSFSIWHWVIVLVVVVLIFG). Residues 43–73 (MKSEGEDAAQTPPAAQKEGGRVIDAEPADKK) are disordered. Positions 60–73 (EGGRVIDAEPADKK) are enriched in basic and acidic residues.

The protein belongs to the TatA/E family. The Tat system comprises two distinct complexes: a TatABC complex, containing multiple copies of TatA, TatB and TatC subunits, and a separate TatA complex, containing only TatA subunits. Substrates initially bind to the TatABC complex, which probably triggers association of the separate TatA complex to form the active translocon.

The protein localises to the cell inner membrane. In terms of biological role, part of the twin-arginine translocation (Tat) system that transports large folded proteins containing a characteristic twin-arginine motif in their signal peptide across membranes. TatA could form the protein-conducting channel of the Tat system. The protein is Sec-independent protein translocase protein TatA of Laribacter hongkongensis (strain HLHK9).